Consider the following 838-residue polypeptide: Probable inorganic carbon transporter subunit DabA (838 aa).

Cys-353, Asp-355, His-537, and Cys-552 together coordinate Zn(2+).

This sequence belongs to the inorganic carbon transporter (TC 9.A.2) DabA family. Forms a complex with DabB. Requires Zn(2+) as cofactor.

It localises to the cell membrane. Part of an energy-coupled inorganic carbon pump. The protein is Probable inorganic carbon transporter subunit DabA of Roseiflexus sp. (strain RS-1).